The sequence spans 159 residues: Protein Smg homolog (159 aa).

This sequence belongs to the Smg family.

The polypeptide is Protein Smg homolog (Vibrio campbellii (strain ATCC BAA-1116)).